The chain runs to 392 residues: Solute carrier family 35 member B1 (392 aa).

The segment at 1–40 (MSLTKKIKNEKSLKQEKQTDQLKSNLRNNNNNINNKSKPK) is disordered. The segment covering 7-20 (IKNEKSLKQEKQTD) has biased composition (basic and acidic residues). Over residues 25 to 35 (NLRNNNNNINN) the composition is skewed to low complexity. Helical transmembrane passes span 57–77 (ELFFIFCVGGIYIFYLLYGLV), 97–117 (AFLLALQCFFNMVSAWLVSLV), 124–144 (NTPFMKYGFVSMLLVISTFLS), 155–175 (TQVLAKSCKPIPVIFMGLLLF), 179–199 (YPFLKYIVVIVISLGISLFML), 215–235 (HLFGNFILFVSLMMDGVMGPF), 247–267 (ATSMMLNTNIWNLGLFSIMAF), 285–305 (VIKLILAFCITSAIGQQFIFL), and 341–361 (LQWAAICMVFGGLILDLYISY). The Di-lysine motif motif lies at 389-392 (KKSL).

The protein belongs to the nucleotide-sugar transporter family. SLC35B subfamily.

Its subcellular location is the endoplasmic reticulum membrane. Probable sugar transporter. The protein is Solute carrier family 35 member B1 (slc35b1) of Dictyostelium discoideum (Social amoeba).